Here is a 429-residue protein sequence, read N- to C-terminus: Glycine betaine monooxygenase oxygenase subunit (429 aa).

The 108-residue stretch at 56–163 (WLIAGMTCEI…VKTAGGYIFI (108 aa)) folds into the Rieske domain. Residues C98, H100, C118, and H121 each contribute to the [2Fe-2S] cluster site. Fe cation is bound by residues H217 and H222.

It belongs to the bacterial ring-hydroxylating dioxygenase alpha subunit family. The system is composed of an oxygenase subunit (GbcA) and a reductase subunit (GbcB). [2Fe-2S] cluster is required as a cofactor. Requires Fe cation as cofactor.

The enzyme catalyses glycine betaine + NADH + O2 + H(+) = N,N-dimethylglycine + formaldehyde + NAD(+) + H2O. In terms of biological role, involved in degradation of glycine betaine. Part of a Rieske-type oxygenase system that catalyzes the conversion of glycine betaine (GB) to dimethylglycine (DMG). This subunit is the terminal oxygenase component of the system. In Pseudomonas aeruginosa (strain UCBPP-PA14), this protein is Glycine betaine monooxygenase oxygenase subunit.